The sequence spans 356 residues: 3-deoxy-alpha-D-manno-octulosonate 8-oxidase (356 aa).

The protein belongs to the iron-containing alcohol dehydrogenase family. A divalent metal cation serves as cofactor.

The catalysed reaction is 3-deoxy-alpha-D-manno-oct-2-ulosonate + O2 = 3,8-dideoxy-8-oxo-alpha-D-manno-octulosonate + H2O2. It functions in the pathway bacterial outer membrane biogenesis; lipopolysaccharide biosynthesis. Inhibited by EDTA. Catalyzes the first step of the biosynthesis of Kdo8N (8-amino-3,8-dideoxy-D-manno-octulosonate) from Kdo (3-deoxy-D-manno-octulosonate). This is 3-deoxy-alpha-D-manno-octulosonate 8-oxidase from Shewanella oneidensis (strain ATCC 700550 / JCM 31522 / CIP 106686 / LMG 19005 / NCIMB 14063 / MR-1).